The primary structure comprises 76 residues: Kappa-actitoxin-Avd4o (76 aa).

The first 19 residues, 1-19, serve as a signal peptide directing secretion; sequence MNKALFLSLVVLCAAVVFA. A propeptide spanning residues 20–33 is cleaved from the precursor; that stretch reads AEDLQKAKHAPFKL. 3 disulfides stabilise this stretch: Cys-37/Cys-72, Cys-39/Cys-65, and Cys-55/Cys-73.

It belongs to the sea anemone type 3 (BDS) potassium channel toxin family. As to expression, experimental results show no expression in the ectodermal tissue from the distal and proximal tentacles, body wall, and oral disk. Since paralogs are expressed in this tissue, an expression of this toxin in this tissue is probable. The negative results could be explained by the very low abundance of EST sequences.

It is found in the secreted. The protein localises to the nematocyst. Its function is as follows. Blocks Kv3 voltage-gated potassium channels. Reduces blood pressure. This Anemonia viridis (Snakelocks anemone) protein is Kappa-actitoxin-Avd4o.